The primary structure comprises 131 residues: MQVKSHKPSKQRKYLYNAPIHHRGKIMSAPLSEELKSKYGINSIPIRKGDRVKVMRGDYRGTEGEVISVDRKRYRIAVKGIVRRKADGTEVPVPIHPSKVVITKLYLKDEARKRLLERKGVKVEEIVEESE.

Belongs to the universal ribosomal protein uL24 family. In terms of assembly, part of the 50S ribosomal subunit.

Its function is as follows. One of two assembly initiator proteins, it binds directly to the 5'-end of the 23S rRNA, where it nucleates assembly of the 50S subunit. In terms of biological role, located at the polypeptide exit tunnel on the outside of the subunit. This Korarchaeum cryptofilum (strain OPF8) protein is Large ribosomal subunit protein uL24.